Reading from the N-terminus, the 226-residue chain is Orotate phosphoribosyltransferase (226 aa).

5-phospho-alpha-D-ribose 1-diphosphate is bound by residues R107, K108, K111, and 133–141; that span reads EDLTTDGGS. T137 contributes to the orotate binding site.

It belongs to the purine/pyrimidine phosphoribosyltransferase family. PyrE subfamily. As to quaternary structure, homodimer. The cofactor is Mg(2+).

The catalysed reaction is orotidine 5'-phosphate + diphosphate = orotate + 5-phospho-alpha-D-ribose 1-diphosphate. It participates in pyrimidine metabolism; UMP biosynthesis via de novo pathway; UMP from orotate: step 1/2. Catalyzes the transfer of a ribosyl phosphate group from 5-phosphoribose 1-diphosphate to orotate, leading to the formation of orotidine monophosphate (OMP). The sequence is that of Orotate phosphoribosyltransferase from Dinoroseobacter shibae (strain DSM 16493 / NCIMB 14021 / DFL 12).